Here is a 109-residue protein sequence, read N- to C-terminus: uncharacterized protein (109 aa).

It to A.fulgidus AF1885.

This is an uncharacterized protein from Methanocaldococcus jannaschii (strain ATCC 43067 / DSM 2661 / JAL-1 / JCM 10045 / NBRC 100440) (Methanococcus jannaschii).